A 627-amino-acid polypeptide reads, in one-letter code: tRNA uridine 5-carboxymethylaminomethyl modification enzyme MnmG (627 aa).

FAD contacts are provided by residues Gly13 to Gly18, Val125, and Ser180. Position 274-288 (Gly274–Phe288) interacts with NAD(+). An FAD-binding site is contributed by Gln371.

It belongs to the MnmG family. In terms of assembly, homodimer. Heterotetramer of two MnmE and two MnmG subunits. It depends on FAD as a cofactor.

The protein localises to the cytoplasm. In terms of biological role, NAD-binding protein involved in the addition of a carboxymethylaminomethyl (cmnm) group at the wobble position (U34) of certain tRNAs, forming tRNA-cmnm(5)s(2)U34. This chain is tRNA uridine 5-carboxymethylaminomethyl modification enzyme MnmG, found in Francisella tularensis subsp. novicida (strain U112).